The chain runs to 644 residues: Arginine--tRNA ligase (644 aa).

The 'HIGH' region motif lies at 134–144; it reads VNPTKPLHMGH.

It belongs to the class-I aminoacyl-tRNA synthetase family.

The protein resides in the cytoplasm. It catalyses the reaction tRNA(Arg) + L-arginine + ATP = L-arginyl-tRNA(Arg) + AMP + diphosphate. The chain is Arginine--tRNA ligase from Thermococcus sibiricus (strain DSM 12597 / MM 739).